Consider the following 655-residue polypeptide: Methyl-accepting chemotaxis protein McpC (655 aa).

At 1–8 (MFKKLHMK) the chain is on the cytoplasmic side. Residues 9–29 (IAVFVSIMLIITVVLLMLSSY) form a helical membrane-spanning segment. The Extracellular segment spans residues 30–276 (LTLKPMITED…LMWISDKMNR (247 aa)). The Cache domain maps to 148-225 (WTEPYKDVVT…SNQGKNISKD (78 aa)). Residues 277 to 297 (ANLWISLIALIITIILSYFLA) traverse the membrane as a helical segment. An HAMP domain is found at 298 to 350 (KTITGPIQQLIVKTKAVSAGDLTVRAESKSKDEVGILTRDFNLMVENMKEMVE). Residues 298-655 (KTITGPIQQL…LMNTIAKFTL (358 aa)) are Cytoplasmic-facing. The region spanning 369 to 619 (VAAETNETSG…ESAAAAEEVN (251 aa)) is the Methyl-accepting transducer domain.

The protein belongs to the methyl-accepting chemotaxis (MCP) protein family. In terms of assembly, interacts with FloT. Some glutamine residues are deamidated to glutamate by CheD and subsequently methylated.

The protein localises to the cell membrane. The protein resides in the membrane raft. Functionally, chemotactic-signal transducers respond to changes in the concentration of attractants and repellents in the environment, transduce a signal from the outside to the inside of the cell, and facilitate sensory adaptation through the variation of the level of methylation. All amino acids serve as attractants in B.subtilis, they appear to cause an increase in the turnover methyl groups, leading to methylation of an unidentified acceptor, while repellents have been shown to cause a decrease in methyl group turnover. The methyl groups are added by a methyltransferase and removed by a methylesterase. McpC is required for taxis to cysteine, proline, threonine, glycine, serine, lysine, valine and arginine and for aspartate, glutamine, histidine and glutamate. Primarily mediates response to positive stimulus of PTS carbohydrates. Greatly influences the duration or magnitude of the response to negative PTS carbohydrate stimulus. This Bacillus subtilis (strain 168) protein is Methyl-accepting chemotaxis protein McpC (mcpC).